Here is an 82-residue protein sequence, read N- to C-terminus: Putative membrane protein insertion efficiency factor (82 aa).

Residues 63-82 (GGFDPVPLKKDKNSKTTHHH) form a disordered region.

This sequence belongs to the UPF0161 family.

It is found in the cell membrane. Functionally, could be involved in insertion of integral membrane proteins into the membrane. The sequence is that of Putative membrane protein insertion efficiency factor from Staphylococcus epidermidis (strain ATCC 35984 / DSM 28319 / BCRC 17069 / CCUG 31568 / BM 3577 / RP62A).